The primary structure comprises 605 residues: Inactive LRR receptor-like serine/threonine-protein kinase BIR2 (605 aa).

An N-terminal signal peptide occupies residues 1 to 28; the sequence is MKEIGSKPRKLLPLCFIIFLCFCSSVMA. Residues 29–229 are Extracellular-facing; the sequence is ADEDDIRCLR…CGGLSKKNLG (201 aa). An N-linked (GlcNAc...) asparagine glycan is attached at Asn-58. LRR repeat units lie at residues 101–125, 127–150, 152–173, and 174–197; these read CASL…LCNW, PFLV…LAKC, FVNS…QFSA, and LGRL…FFSS. Residues 230–250 form a helical membrane-spanning segment; sequence IIIAAGVFGAAASMLLAFGIW. Residues 251-605 are Cytoplasmic-facing; sequence WYYHLKWTRR…IFDTQENEKV (355 aa). At Ser-271 the chain carries Phosphoserine; by BAK1. Thr-283 bears the Phosphothreonine; by BAK1 mark. Ser-286 is subject to Phosphoserine; by BAK1. Thr-304 carries the phosphothreonine; by BAK1 modification. Positions 307–578 constitute a Protein kinase domain; that stretch reads FNSENIIVST…FQAYQSLKAI (272 aa). Residue 313-321 participates in ATP binding; it reads IVSTRTGTT. At Ser-330 the chain carries Phosphoserine; by BAK1. Position 335 (Lys-335) interacts with ATP. Position 389 is a phosphoserine; by BAK1 (Ser-389). Position 402 is a phosphothreonine (Thr-402). 2 positions are modified to phosphoserine; by BAK1: Ser-448 and Ser-462. Thr-466 is modified (phosphothreonine; by BAK1). Tyr-479 carries the post-translational modification Phosphotyrosine. Thr-482 bears the Phosphothreonine mark. The residue at position 486 (Ser-486) is a Phosphoserine. At Thr-533 the chain carries Phosphothreonine; by BAK1.

Belongs to the protein kinase superfamily. Ser/Thr protein kinase family. Interacts constitutively with BAK1, when phosphorylated, thereby preventing interaction with the ligand-binding LRR-RLK FLS2. Upon infection, pathogen-associated molecular patterns (PAMP) perception leads to BIR2 release from the BAK1 complex and enables the recruitment of BAK1 into the FLS2 complex. Phosphorylated by BAK1, this interacts promotes interaction with BAK1.

It localises to the cell membrane. In terms of biological role, pseudokinases lacking protein kinase activity and unable to bind ATP-analogs. Negative regulator of pathogen-associated molecular patterns- (PAMP-) triggered immunity by limiting BAK1-receptor complex formation in the absence of ligands. The chain is Inactive LRR receptor-like serine/threonine-protein kinase BIR2 from Arabidopsis thaliana (Mouse-ear cress).